The following is a 105-amino-acid chain: Small ribosomal subunit protein uS10 (105 aa).

The protein belongs to the universal ribosomal protein uS10 family. Part of the 30S ribosomal subunit.

Involved in the binding of tRNA to the ribosomes. The chain is Small ribosomal subunit protein uS10 from Lawsonia intracellularis (strain PHE/MN1-00).